Here is a 230-residue protein sequence, read N- to C-terminus: Somatolactin (230 aa).

The N-terminal stretch at 1–25 (MHTKVLQQGLWALLLWPHLFTVSVP) is a signal peptide. 3 disulfides stabilise this stretch: Cys28–Cys38, Cys88–Cys204, and Cys221–Cys229. N-linked (GlcNAc...) asparagine glycosylation is present at Asn144.

It belongs to the somatotropin/prolactin family.

It is found in the secreted. In terms of biological role, selectively regulates proliferation and morphogenesis of neural-crest derived pigment cells. The sequence is that of Somatolactin from Oryzias latipes (Japanese rice fish).